The chain runs to 216 residues: Probable transaldolase (216 aa).

Lysine 85 serves as the catalytic Schiff-base intermediate with substrate.

It belongs to the transaldolase family. Type 3B subfamily.

It is found in the cytoplasm. The catalysed reaction is D-sedoheptulose 7-phosphate + D-glyceraldehyde 3-phosphate = D-erythrose 4-phosphate + beta-D-fructose 6-phosphate. It functions in the pathway carbohydrate degradation; pentose phosphate pathway; D-glyceraldehyde 3-phosphate and beta-D-fructose 6-phosphate from D-ribose 5-phosphate and D-xylulose 5-phosphate (non-oxidative stage): step 2/3. Transaldolase is important for the balance of metabolites in the pentose-phosphate pathway. The polypeptide is Probable transaldolase (Dehalococcoides mccartyi (strain ATCC BAA-2266 / KCTC 15142 / 195) (Dehalococcoides ethenogenes (strain 195))).